Here is a 752-residue protein sequence, read N- to C-terminus: Ribonucleases P/MRP protein subunit popl-1 (752 aa).

Residues 638–663 (KTTKRKRVNRKKRESKKRRKIEQEKR) form a disordered region. A compositionally biased stretch (basic residues) spans 640–657 (TKRKRVNRKKRESKKRRK).

In terms of assembly, component of nuclear RNase P and RNase MRP ribonucleoproteins. Several subunits of RNase P are also part of the RNase MRP complex.

Its subcellular location is the nucleus. The protein localises to the nucleolus. It catalyses the reaction Endonucleolytic cleavage of RNA, removing 5'-extranucleotides from tRNA precursor.. Component of ribonuclease P, a ribonucleoprotein complex that generates mature tRNA molecules by cleaving their 5'-ends. Also a component of the MRP ribonuclease complex, which cleaves pre-rRNA sequences. This Caenorhabditis elegans protein is Ribonucleases P/MRP protein subunit popl-1.